A 405-amino-acid chain; its full sequence is 2,3-diketo-5-methylthiopentyl-1-phosphate enolase (405 aa).

The Proton acceptor role is filled by K91. Substrate contacts are provided by residues K140, 166–169 (KDDE), H257, G329, and 351–352 (GG). Mg(2+) is bound by residues K166, D168, and E169. K166 bears the N6-carboxylysine mark.

This sequence belongs to the RuBisCO large chain family. Type IV subfamily. Homodimer. Mg(2+) serves as cofactor.

The catalysed reaction is 5-methylsulfanyl-2,3-dioxopentyl phosphate = 2-hydroxy-5-methylsulfanyl-3-oxopent-1-enyl phosphate. It participates in amino-acid biosynthesis; L-methionine biosynthesis via salvage pathway; L-methionine from S-methyl-5-thio-alpha-D-ribose 1-phosphate: step 3/6. Functionally, catalyzes the enolization of 2,3-diketo-5-methylthiopentyl-1-phosphate (DK-MTP-1-P) into 2-hydroxy-3-keto-5-methylthiopentenyl-1-phosphate (HK-MTPenyl-1-P). This is 2,3-diketo-5-methylthiopentyl-1-phosphate enolase from Bacillus licheniformis (strain ATCC 14580 / DSM 13 / JCM 2505 / CCUG 7422 / NBRC 12200 / NCIMB 9375 / NCTC 10341 / NRRL NRS-1264 / Gibson 46).